The primary structure comprises 165 residues: Crossover junction endodeoxyribonuclease RuvC (165 aa).

Catalysis depends on residues Asp8, Glu66, and Asp138. Mg(2+)-binding residues include Asp8, Glu66, and Asp138.

Belongs to the RuvC family. Homodimer which binds Holliday junction (HJ) DNA. The HJ becomes 2-fold symmetrical on binding to RuvC with unstacked arms; it has a different conformation from HJ DNA in complex with RuvA. In the full resolvosome a probable DNA-RuvA(4)-RuvB(12)-RuvC(2) complex forms which resolves the HJ. Mg(2+) serves as cofactor.

The protein localises to the cytoplasm. The catalysed reaction is Endonucleolytic cleavage at a junction such as a reciprocal single-stranded crossover between two homologous DNA duplexes (Holliday junction).. In terms of biological role, the RuvA-RuvB-RuvC complex processes Holliday junction (HJ) DNA during genetic recombination and DNA repair. Endonuclease that resolves HJ intermediates. Cleaves cruciform DNA by making single-stranded nicks across the HJ at symmetrical positions within the homologous arms, yielding a 5'-phosphate and a 3'-hydroxyl group; requires a central core of homology in the junction. The consensus cleavage sequence is 5'-(A/T)TT(C/G)-3'. Cleavage occurs on the 3'-side of the TT dinucleotide at the point of strand exchange. HJ branch migration catalyzed by RuvA-RuvB allows RuvC to scan DNA until it finds its consensus sequence, where it cleaves and resolves the cruciform DNA. The sequence is that of Crossover junction endodeoxyribonuclease RuvC from Methylococcus capsulatus (strain ATCC 33009 / NCIMB 11132 / Bath).